The sequence spans 142 residues: Small ribosomal subunit protein bS6 (142 aa).

The segment covering 110–133 (NKKPSHAKEKHEKTEHTHSHHLEE) has biased composition (basic and acidic residues). The disordered stretch occupies residues 110–142 (NKKPSHAKEKHEKTEHTHSHHLEEAESVGSHSE).

It belongs to the bacterial ribosomal protein bS6 family.

Binds together with bS18 to 16S ribosomal RNA. In Helicobacter pylori (strain HPAG1), this protein is Small ribosomal subunit protein bS6.